A 298-amino-acid polypeptide reads, in one-letter code: Nucleotide-binding protein Csal_2229 (298 aa).

8–15 (GRSGSGKS) is a binding site for ATP. 59–62 (DARN) lines the GTP pocket.

Belongs to the RapZ-like family.

Its function is as follows. Displays ATPase and GTPase activities. The polypeptide is Nucleotide-binding protein Csal_2229 (Chromohalobacter salexigens (strain ATCC BAA-138 / DSM 3043 / CIP 106854 / NCIMB 13768 / 1H11)).